The following is a 165-amino-acid chain: 3-isopropylmalate dehydratase small subunit (165 aa).

The protein belongs to the LeuD family. LeuD type 2 subfamily. As to quaternary structure, heterodimer of LeuC and LeuD.

The enzyme catalyses (2R,3S)-3-isopropylmalate = (2S)-2-isopropylmalate. It participates in amino-acid biosynthesis; L-leucine biosynthesis; L-leucine from 3-methyl-2-oxobutanoate: step 2/4. Functionally, catalyzes the isomerization between 2-isopropylmalate and 3-isopropylmalate, via the formation of 2-isopropylmaleate. This chain is 3-isopropylmalate dehydratase small subunit, found in Lachnoclostridium phytofermentans (strain ATCC 700394 / DSM 18823 / ISDg) (Clostridium phytofermentans).